The sequence spans 128 residues: Large ribosomal subunit protein bL20 (128 aa).

The protein belongs to the bacterial ribosomal protein bL20 family.

Binds directly to 23S ribosomal RNA and is necessary for the in vitro assembly process of the 50S ribosomal subunit. It is not involved in the protein synthesizing functions of that subunit. The polypeptide is Large ribosomal subunit protein bL20 (Anaplasma marginale (strain Florida)).